Here is a 360-residue protein sequence, read N- to C-terminus: Vomilenine reductase (360 aa).

One can recognise an Enoyl reductase (ER) domain in the interval 23 to 351 (GLLSPFNFSR…KADVKYRFVI (329 aa)). Cys-50 contributes to the Zn(2+) binding site. Ser-52 contacts an alcohol. Ser-52 lines the NADP(+) pocket. Zn(2+)-binding residues include Asp-53, His-72, Glu-73, Cys-103, Cys-106, Cys-109, Cys-117, and Cys-166. An an alcohol-binding site is contributed by His-72. NADP(+) is bound by residues Leu-192, Gly-194, Leu-195, Ser-214, Thr-215, Ser-216, Lys-219, Lys-220, Val-277, Ala-279, Ser-301, and Arg-348.

Belongs to the zinc-containing alcohol dehydrogenase family. Class-P subfamily. As to quaternary structure, homodimer. The cofactor is Zn(2+). Confined to roots.

The protein localises to the cytoplasm. The enzyme catalyses (2R)-1,2-dihydrovomilenine + NADP(+) = vomilenine + NADPH + H(+). Its pathway is alkaloid biosynthesis; ajmaline biosynthesis. With respect to regulation, inhibited by EDTA and p-hydroxymercuribenzoate, a sulfhydryl reagent. Alcohol dehydrogenase involved in the biosynthesis of ajmaline-type monoterpenoid indole alkaloids (MIAs) natural products, important plant-derived pharmaceuticals used in the therapy of heart disorders. Catalyzes the conversion of vomilenine to 1,2-dihydrovomilenine, an intermediate chemical in the biosynthesis of ajmaline. The sequence is that of Vomilenine reductase from Rauvolfia serpentina (Serpentine wood).